A 570-amino-acid polypeptide reads, in one-letter code: Molecular chaperone MKKS (570 aa).

ATP is bound at residue 192–199 (ERMVLGKS). The substrate-binding apical domain stretch occupies residues 198–370 (KSIIVPLKGQ…FHLLPNEATV (173 aa)).

This sequence belongs to the TCP-1 chaperonin family. In terms of assembly, component of a complex composed at least of MKKS, BBS10, BBS12, TCP1, CCT2, CCT3, CCT4, CCT5 and CCT8. Interacts with STUB1. Interacts with BBS2 (via coiled coil domain). Interacts with CCDC28B. Interacts with BBS12. Interacts with SMARCC1, a component of the SWI/SNF complexes; the interaction takes place predominantly in the cytoplasm and may modulate SMARCC1 location. Interacts with DLEC1. Widely expressed in adult and fetal tissues. Expressed in the developing heart, brain retina, limb buds, as well as in the developing neural tube. Expressed in the embryo in the first and second branchial arches. Expressed in parafin embedded tissue sections of brain, kidney, retina, olfactory epithelium and the ependymal layer of ventricles. Detected only in restricted regions of these tissue sections, including the ciliated border of renal tubules, the connecting cilium and the inner and outer nuclear layers of retina, and the ciliated layer of olfactory epithelia.

It is found in the cytoplasm. The protein resides in the cytoskeleton. The protein localises to the microtubule organizing center. Its subcellular location is the centrosome. It localises to the cytosol. It is found in the nucleus. Its function is as follows. Probable molecular chaperone that assists the folding of proteins upon ATP hydrolysis. Plays a role in the assembly of BBSome, a complex involved in ciliogenesis regulating transports vesicles to the cilia. May play a role in protein processing in limb, cardiac and reproductive system development. May play a role in cytokinesis. The chain is Molecular chaperone MKKS (Mkks) from Mus musculus (Mouse).